The sequence spans 189 residues: MILDYNKLKQETKAIVVDIIERSALKKGQIFVLGLSSSEVSGGLIGKNSSSEIGEIIVEVILKELHSRGIYLAVQGCEHVNRALVVEAELAERQQLEVVNVVPNLHAGGSGQVAAFKLMTSPVEVEEIVAHAGIDIGDTSIGMHIKRVQVPLIPISRELGGAHVTALASRPKLIGGARAGYTSDPIRKF.

This sequence belongs to the UPF0340 family.

In Streptococcus agalactiae serotype V (strain ATCC BAA-611 / 2603 V/R), this protein is UPF0340 protein SAG0103.